We begin with the raw amino-acid sequence, 181 residues long: Inorganic pyrophosphatase 2 (181 aa).

3 residues coordinate substrate: lysine 30, arginine 44, and tyrosine 56. The Mg(2+) site is built by aspartate 66, aspartate 71, and aspartate 103. Substrate is bound at residue tyrosine 142.

Belongs to the PPase family. Homohexamer. Requires Mg(2+) as cofactor.

The protein localises to the cytoplasm. The catalysed reaction is diphosphate + H2O = 2 phosphate + H(+). In terms of biological role, catalyzes the hydrolysis of inorganic pyrophosphate (PPi) forming two phosphate ions. The polypeptide is Inorganic pyrophosphatase 2 (Pseudomonas syringae pv. tomato (strain ATCC BAA-871 / DC3000)).